Here is a 207-residue protein sequence, read N- to C-terminus: Ubiquitin-conjugating enzyme E2 E3 (207 aa).

The segment covering 1–10 has biased composition (basic and acidic residues); sequence MSSDRQRSDD. Positions 1–63 are disordered; sequence MSSDRQRSDD…KTTAKLSTSA (63 aa). The residue at position 2 (Ser2) is an N-acetylserine. Ser8 is subject to Phosphoserine. Over residues 50-63 the composition is skewed to low complexity; that stretch reads KLSSKTTAKLSTSA. In terms of domain architecture, UBC core spans 61-207; sequence TSAKRIQKEL…ARQWTKRYAT (147 aa). Cys145 serves as the catalytic Glycyl thioester intermediate.

Belongs to the ubiquitin-conjugating enzyme family. As to quaternary structure, the ubiquitin-loaded form interacts specifically with importin-11 (IPO11), leading to its import into the nucleus. Interacts with NEDD4L.

The protein localises to the nucleus. Its subcellular location is the cytoplasm. It carries out the reaction S-ubiquitinyl-[E1 ubiquitin-activating enzyme]-L-cysteine + [E2 ubiquitin-conjugating enzyme]-L-cysteine = [E1 ubiquitin-activating enzyme]-L-cysteine + S-ubiquitinyl-[E2 ubiquitin-conjugating enzyme]-L-cysteine.. It functions in the pathway protein modification; protein ubiquitination. Accepts ubiquitin from the E1 complex and catalyzes its covalent attachment to other proteins. In vitro catalyzes 'Lys-11'- and 'Lys-48'-, as well as 'Lys-63'-linked polyubiquitination. Participates in the regulation of transepithelial sodium transport in renal cells. This is Ubiquitin-conjugating enzyme E2 E3 (UBE2E3) from Bos taurus (Bovine).